The chain runs to 274 residues: MVESNDIIKSGLAEKALKALILQCEENPSLKNDKDIHIIINTGKKMGINRDNIPRIIPLTKYKLFKPRDLNILLITKDPSALYRETLTKDEHTSELFKEIISVKNLRRRFKGSKLTQLYKDFDLVVADYRVHHLLPEVLGSRFYHGSKKLPYMIRMSKEVKLKRQQMVEKCDPIYVRAQLRSICKNTSYIPNNDNCLSVRVGYIQKHSIPEILQNIQDTINFLTDKSKRPQGGVIKGGIISIFVKTSNSTSLPIYQFSEARENQKNEDLSDIKL.

The protein belongs to the universal ribosomal protein uL1 family. Highly divergent. As to quaternary structure, component of the 90S pre-ribosomes. Interacts with FAF1.

It localises to the nucleus. It is found in the nucleolus. In terms of biological role, involved in rRNA-processing and ribosome biosynthesis. This Saccharomyces cerevisiae (strain ATCC 204508 / S288c) (Baker's yeast) protein is Ribosome biogenesis protein UTP30 (UTP30).